Consider the following 529-residue polypeptide: Bifunctional purine biosynthesis protein PurH (529 aa).

The 148-residue stretch at 1–148 (MQQHRPVRRA…KNHKDVAIVV (148 aa)) folds into the MGS-like domain.

The protein belongs to the PurH family.

The enzyme catalyses (6R)-10-formyltetrahydrofolate + 5-amino-1-(5-phospho-beta-D-ribosyl)imidazole-4-carboxamide = 5-formamido-1-(5-phospho-D-ribosyl)imidazole-4-carboxamide + (6S)-5,6,7,8-tetrahydrofolate. It catalyses the reaction IMP + H2O = 5-formamido-1-(5-phospho-D-ribosyl)imidazole-4-carboxamide. Its pathway is purine metabolism; IMP biosynthesis via de novo pathway; 5-formamido-1-(5-phospho-D-ribosyl)imidazole-4-carboxamide from 5-amino-1-(5-phospho-D-ribosyl)imidazole-4-carboxamide (10-formyl THF route): step 1/1. The protein operates within purine metabolism; IMP biosynthesis via de novo pathway; IMP from 5-formamido-1-(5-phospho-D-ribosyl)imidazole-4-carboxamide: step 1/1. The sequence is that of Bifunctional purine biosynthesis protein PurH from Erwinia tasmaniensis (strain DSM 17950 / CFBP 7177 / CIP 109463 / NCPPB 4357 / Et1/99).